A 224-amino-acid chain; its full sequence is Large ribosomal subunit protein uL4 (224 aa).

The disordered stretch occupies residues 54 to 73 (NRSEVSHSTKKPFRQKGTGN).

This sequence belongs to the universal ribosomal protein uL4 family. Part of the 50S ribosomal subunit.

Its function is as follows. One of the primary rRNA binding proteins, this protein initially binds near the 5'-end of the 23S rRNA. It is important during the early stages of 50S assembly. It makes multiple contacts with different domains of the 23S rRNA in the assembled 50S subunit and ribosome. Functionally, forms part of the polypeptide exit tunnel. This Chlamydia felis (strain Fe/C-56) (Chlamydophila felis) protein is Large ribosomal subunit protein uL4.